The chain runs to 578 residues: Asparagine synthetase [glutamine-hydrolyzing] 3 (578 aa).

Cys-2 acts as the For GATase activity in catalysis. The Glutamine amidotransferase type-2 domain occupies 2–185 (CGILAVLGCV…PGHIYSSKQG (184 aa)). L-glutamine-binding positions include 50-54 (RLAIV), 75-77 (NGE), and Asp-98. An Asparagine synthetase domain is found at 210–450 (VRNTFEKAVI…LPKHILYRQK (241 aa)). ATP contacts are provided by residues Leu-231, Ile-267, and 341-342 (SG). The segment covering 555-572 (GEDKTEDSRPEKLQKLAE) has biased composition (basic and acidic residues). A disordered region spans residues 555 to 578 (GEDKTEDSRPEKLQKLAEKTPAIV).

The enzyme catalyses L-aspartate + L-glutamine + ATP + H2O = L-asparagine + L-glutamate + AMP + diphosphate + H(+). Its pathway is amino-acid biosynthesis; L-asparagine biosynthesis. Functionally, essential for nitrogen assimilation, distribution and remobilization within the plant via the phloem. The polypeptide is Asparagine synthetase [glutamine-hydrolyzing] 3 (ASN3) (Arabidopsis thaliana (Mouse-ear cress)).